A 230-amino-acid polypeptide reads, in one-letter code: UPF0173 metal-dependent hydrolase Pden_0574 (230 aa).

It belongs to the UPF0173 family.

The polypeptide is UPF0173 metal-dependent hydrolase Pden_0574 (Paracoccus denitrificans (strain Pd 1222)).